The chain runs to 287 residues: MAIRKFKPYTPGTRQRVVTDFSEITSAKPERSLIVSKHRVKGRNNRGVITCRHRGGGHKRQYRLVDFRRDKRNINAKVAAIHYDPHRNARLALLFYEDGEKRYIIAPAGVKVGQNVISGESVPIEDGNAMPLSVMPLGSSVHCVELYAGRGAQMVRSAGASAQVMAKEGDYVALKLPSTEVRLVRKECYATLGEVGNSEIRNTSLGKAGRRRWLGRRPQVRGSVMNPCDHPHGGGEGKAPIGRAGPVTPWGKPALGLKTRKKNKPSNKLVVRRRRRVSKRSRGGRDS.

The segment at 221–287 (RGSVMNPCDH…SKRSRGGRDS (67 aa)) is disordered. Residues 258–287 (KTRKKNKPSNKLVVRRRRRVSKRSRGGRDS) are compositionally biased toward basic residues.

The protein belongs to the universal ribosomal protein uL2 family. In terms of assembly, part of the 50S ribosomal subunit. Forms a bridge to the 30S subunit in the 70S ribosome.

Functionally, one of the primary rRNA binding proteins. Required for association of the 30S and 50S subunits to form the 70S ribosome, for tRNA binding and peptide bond formation. It has been suggested to have peptidyltransferase activity; this is somewhat controversial. Makes several contacts with the 16S rRNA in the 70S ribosome. The polypeptide is Large ribosomal subunit protein uL2 (Prochlorococcus marinus (strain AS9601)).